A 122-amino-acid chain; its full sequence is Large ribosomal subunit protein bL12 (122 aa).

It belongs to the bacterial ribosomal protein bL12 family. In terms of assembly, homodimer. Part of the ribosomal stalk of the 50S ribosomal subunit. Forms a multimeric L10(L12)X complex, where L10 forms an elongated spine to which 2 to 4 L12 dimers bind in a sequential fashion. Binds GTP-bound translation factors.

In terms of biological role, forms part of the ribosomal stalk which helps the ribosome interact with GTP-bound translation factors. Is thus essential for accurate translation. The sequence is that of Large ribosomal subunit protein bL12 from Vibrio vulnificus (strain CMCP6).